The chain runs to 438 residues: Tyrosine--tRNA ligase (438 aa).

Y47 contacts L-tyrosine. A 'HIGH' region motif is present at residues 52–61 (PTATSLHVGG). L-tyrosine contacts are provided by Y183 and Q187. The 'KMSKS' region signature appears at 243–247 (KMGKT). K246 serves as a coordination point for ATP. Positions 370–436 (LWIVEALQTA…GKRKYALLKI (67 aa)) constitute an S4 RNA-binding domain.

This sequence belongs to the class-I aminoacyl-tRNA synthetase family. TyrS type 1 subfamily. As to quaternary structure, homodimer.

It is found in the cytoplasm. It catalyses the reaction tRNA(Tyr) + L-tyrosine + ATP = L-tyrosyl-tRNA(Tyr) + AMP + diphosphate + H(+). Catalyzes the attachment of tyrosine to tRNA(Tyr) in a two-step reaction: tyrosine is first activated by ATP to form Tyr-AMP and then transferred to the acceptor end of tRNA(Tyr). This is Tyrosine--tRNA ligase from Rhodopirellula baltica (strain DSM 10527 / NCIMB 13988 / SH1).